A 100-amino-acid polypeptide reads, in one-letter code: MFGHALLLGAFPFCIGIYGLITSRNTVRALMCLELIFNAVNVNFVTFPNYLDIQQIKGEILSVFVIAVAAAEAAIGSAIVLAIYRNRESIRIDQFNLLKW.

Transmembrane regions (helical) follow at residues 1–21 (MFGH…YGLI), 29–49 (ALMC…TFPN), and 63–83 (VFVI…VLAI).

Belongs to the complex I subunit 4L family. As to quaternary structure, NDH is composed of at least 16 different subunits, 5 of which are encoded in the nucleus.

Its subcellular location is the plastid. It is found in the chloroplast thylakoid membrane. It carries out the reaction a plastoquinone + NADH + (n+1) H(+)(in) = a plastoquinol + NAD(+) + n H(+)(out). It catalyses the reaction a plastoquinone + NADPH + (n+1) H(+)(in) = a plastoquinol + NADP(+) + n H(+)(out). Its function is as follows. NDH shuttles electrons from NAD(P)H:plastoquinone, via FMN and iron-sulfur (Fe-S) centers, to quinones in the photosynthetic chain and possibly in a chloroplast respiratory chain. The immediate electron acceptor for the enzyme in this species is believed to be plastoquinone. Couples the redox reaction to proton translocation, and thus conserves the redox energy in a proton gradient. This chain is NAD(P)H-quinone oxidoreductase subunit 4L, chloroplastic, found in Huperzia lucidula (Shining clubmoss).